The primary structure comprises 102 residues: ATP-dependent Clp protease adapter protein ClpS (102 aa).

Basic and acidic residues predominate over residues methionine 1 to leucine 18. The interval methionine 1–proline 21 is disordered.

This sequence belongs to the ClpS family. In terms of assembly, binds to the N-terminal domain of the chaperone ClpA.

Functionally, involved in the modulation of the specificity of the ClpAP-mediated ATP-dependent protein degradation. This is ATP-dependent Clp protease adapter protein ClpS from Idiomarina loihiensis (strain ATCC BAA-735 / DSM 15497 / L2-TR).